The sequence spans 171 residues: Sec-independent protein translocase protein TatB (171 aa).

The chain crosses the membrane as a helical span at residues 1–21 (MFDIGFSELLLVFIIGLVVLG). Positions 117 to 171 (KDNETAHEGVTPAAAQTQASSPEQKPETTPEPVVKPAADAEPKTAAPSPSSSDKP) are disordered. Polar residues predominate over residues 130–139 (AAQTQASSPE).

It belongs to the TatB family. The Tat system comprises two distinct complexes: a TatABC complex, containing multiple copies of TatA, TatB and TatC subunits, and a separate TatA complex, containing only TatA subunits. Substrates initially bind to the TatABC complex, which probably triggers association of the separate TatA complex to form the active translocon.

It is found in the cell inner membrane. Its function is as follows. Part of the twin-arginine translocation (Tat) system that transports large folded proteins containing a characteristic twin-arginine motif in their signal peptide across membranes. Together with TatC, TatB is part of a receptor directly interacting with Tat signal peptides. TatB may form an oligomeric binding site that transiently accommodates folded Tat precursor proteins before their translocation. In Escherichia coli O6:K15:H31 (strain 536 / UPEC), this protein is Sec-independent protein translocase protein TatB.